We begin with the raw amino-acid sequence, 214 residues long: 3-isopropylmalate dehydratase small subunit (214 aa).

It belongs to the LeuD family. LeuD type 1 subfamily. In terms of assembly, heterodimer of LeuC and LeuD.

The catalysed reaction is (2R,3S)-3-isopropylmalate = (2S)-2-isopropylmalate. It functions in the pathway amino-acid biosynthesis; L-leucine biosynthesis; L-leucine from 3-methyl-2-oxobutanoate: step 2/4. Functionally, catalyzes the isomerization between 2-isopropylmalate and 3-isopropylmalate, via the formation of 2-isopropylmaleate. The sequence is that of 3-isopropylmalate dehydratase small subunit from Desulforapulum autotrophicum (strain ATCC 43914 / DSM 3382 / VKM B-1955 / HRM2) (Desulfobacterium autotrophicum).